The following is a 400-amino-acid chain: Acetate kinase (400 aa).

Residue Asn7 participates in Mg(2+) binding. An ATP-binding site is contributed by Lys14. Position 90 (Arg90) interacts with substrate. Residue Asp147 is the Proton donor/acceptor of the active site. Residues 207-211, 282-284, and 331-335 each bind ATP; these read HLGNG, DFR, and GIGEN. Glu384 provides a ligand contact to Mg(2+).

It belongs to the acetokinase family. Homodimer. The cofactor is Mg(2+). It depends on Mn(2+) as a cofactor.

The protein resides in the cytoplasm. The catalysed reaction is acetate + ATP = acetyl phosphate + ADP. It functions in the pathway metabolic intermediate biosynthesis; acetyl-CoA biosynthesis; acetyl-CoA from acetate: step 1/2. In terms of biological role, catalyzes the formation of acetyl phosphate from acetate and ATP. Can also catalyze the reverse reaction. This is Acetate kinase from Thermoanaerobacterium thermosaccharolyticum (strain ATCC 7956 / DSM 571 / NCIMB 9385 / NCA 3814 / NCTC 13789 / WDCM 00135 / 2032) (Clostridium thermosaccharolyticum).